The primary structure comprises 568 residues: Urease subunit alpha (568 aa).

Positions 131–568 constitute a Urease domain; sequence GGMDAHIHFI…LPLAQRYFLY (438 aa). Residues H136, H138, and K219 each coordinate Ni(2+). K219 is modified (N6-carboxylysine). Residue H221 coordinates substrate. 2 residues coordinate Ni(2+): H248 and H274. Catalysis depends on H322, which acts as the Proton donor. Residue D362 participates in Ni(2+) binding.

This sequence belongs to the metallo-dependent hydrolases superfamily. Urease alpha subunit family. As to quaternary structure, heterotrimer of UreA (gamma), UreB (beta) and UreC (alpha) subunits. Three heterotrimers associate to form the active enzyme. Ni cation serves as cofactor. In terms of processing, carboxylation allows a single lysine to coordinate two nickel ions.

The protein resides in the cytoplasm. It catalyses the reaction urea + 2 H2O + H(+) = hydrogencarbonate + 2 NH4(+). It functions in the pathway nitrogen metabolism; urea degradation; CO(2) and NH(3) from urea (urease route): step 1/1. This Cereibacter sphaeroides (strain ATCC 17023 / DSM 158 / JCM 6121 / CCUG 31486 / LMG 2827 / NBRC 12203 / NCIMB 8253 / ATH 2.4.1.) (Rhodobacter sphaeroides) protein is Urease subunit alpha.